We begin with the raw amino-acid sequence, 321 residues long: MSKPIQMEKGVKYRDADKMALIPVKNMPTEQKEVLRKPEWMKIKLPASSKRIDDIKSAMRKNNLHSVCEEASCPNLAECFNHGTATFMILGAICTRRCPFCDVAHGRPVAPEAEEPKKLAKTIQDMKLKYVVITSVDRDDLRDGGAQHFADCNREIRALNPEIRIETLVPDFRGRMDRALEAMIDNPPDVFNHNLETAPRLYRKVRPGANYQWSLDLLKKFKDQHPNVPTKSGLMMGLGETKEEIVEVLKDLRAHGVTMLTLGQYLAPSRHHLPVERYVPPAEFDELKEIALELGFTHAACGPFVRSSYHADLQAKGEEVK.

7 residues coordinate [4Fe-4S] cluster: Cys68, Cys73, Cys79, Cys94, Cys98, Cys101, and Ser308. A Radical SAM core domain is found at 80–297; the sequence is FNHGTATFMI…KEIALELGFT (218 aa).

It belongs to the radical SAM superfamily. Lipoyl synthase family. It depends on [4Fe-4S] cluster as a cofactor.

Its subcellular location is the cytoplasm. It catalyses the reaction [[Fe-S] cluster scaffold protein carrying a second [4Fe-4S](2+) cluster] + N(6)-octanoyl-L-lysyl-[protein] + 2 oxidized [2Fe-2S]-[ferredoxin] + 2 S-adenosyl-L-methionine + 4 H(+) = [[Fe-S] cluster scaffold protein] + N(6)-[(R)-dihydrolipoyl]-L-lysyl-[protein] + 4 Fe(3+) + 2 hydrogen sulfide + 2 5'-deoxyadenosine + 2 L-methionine + 2 reduced [2Fe-2S]-[ferredoxin]. The protein operates within protein modification; protein lipoylation via endogenous pathway; protein N(6)-(lipoyl)lysine from octanoyl-[acyl-carrier-protein]: step 2/2. Functionally, catalyzes the radical-mediated insertion of two sulfur atoms into the C-6 and C-8 positions of the octanoyl moiety bound to the lipoyl domains of lipoate-dependent enzymes, thereby converting the octanoylated domains into lipoylated derivatives. The sequence is that of Lipoyl synthase from Aliivibrio fischeri (strain MJ11) (Vibrio fischeri).